A 261-amino-acid polypeptide reads, in one-letter code: tRNA U34 carboxymethyltransferase (261 aa).

Residues Lys25, Trp39, Lys44, Gly63, 114–115, Tyr135, and Arg250 each bind carboxy-S-adenosyl-L-methionine; that span reads VE.

Belongs to the class I-like SAM-binding methyltransferase superfamily. CmoB family. Homotetramer.

The catalysed reaction is carboxy-S-adenosyl-L-methionine + 5-hydroxyuridine(34) in tRNA = 5-carboxymethoxyuridine(34) in tRNA + S-adenosyl-L-homocysteine + H(+). Functionally, catalyzes carboxymethyl transfer from carboxy-S-adenosyl-L-methionine (Cx-SAM) to 5-hydroxyuridine (ho5U) to form 5-carboxymethoxyuridine (cmo5U) at position 34 in tRNAs. This chain is tRNA U34 carboxymethyltransferase, found in Helicobacter pylori (strain P12).